The primary structure comprises 299 residues: Acetylglutamate kinase (299 aa).

Substrate contacts are provided by residues 62–63 (GG), Arg84, and Asn188.

The protein belongs to the acetylglutamate kinase family. ArgB subfamily.

The protein localises to the cytoplasm. The catalysed reaction is N-acetyl-L-glutamate + ATP = N-acetyl-L-glutamyl 5-phosphate + ADP. It functions in the pathway amino-acid biosynthesis; L-arginine biosynthesis; N(2)-acetyl-L-ornithine from L-glutamate: step 2/4. In terms of biological role, catalyzes the ATP-dependent phosphorylation of N-acetyl-L-glutamate. The protein is Acetylglutamate kinase of Methanosarcina acetivorans (strain ATCC 35395 / DSM 2834 / JCM 12185 / C2A).